Reading from the N-terminus, the 234-residue chain is Bromodomain-containing protein DDB_G0271118 (234 aa).

Residues 1–60 form the Bromo domain; sequence MDLGTIKGELDNNGYSTIKDFTADVRLMFENALTYNADSSPIWKHAKTLLYFHRKHDEHV. A compositionally biased stretch (low complexity) spans 134-194; it reads NNNSNNNNNN…SSSSSSSSSS (61 aa). The disordered stretch occupies residues 134-209; sequence NNNSNNNNNN…KKYSDEERRN (76 aa).

The chain is Bromodomain-containing protein DDB_G0271118 from Dictyostelium discoideum (Social amoeba).